The following is a 125-amino-acid chain: Small ribosomal subunit protein uS13 (125 aa).

The protein belongs to the universal ribosomal protein uS13 family. As to quaternary structure, part of the 30S ribosomal subunit. Forms a loose heterodimer with protein S19. Forms two bridges to the 50S subunit in the 70S ribosome.

Located at the top of the head of the 30S subunit, it contacts several helices of the 16S rRNA. In the 70S ribosome it contacts the 23S rRNA (bridge B1a) and protein L5 of the 50S subunit (bridge B1b), connecting the 2 subunits; these bridges are implicated in subunit movement. Contacts the tRNAs in the A and P-sites. In Rickettsia rickettsii (strain Iowa), this protein is Small ribosomal subunit protein uS13.